Reading from the N-terminus, the 331-residue chain is DNA polymerase III subunit delta (331 aa).

It belongs to the DNA polymerase HolA subunit family. In terms of assembly, DNA polymerase III contains a core (composed of alpha, epsilon and theta chains) that associates with a tau subunit. This core dimerizes to form the POLIII' complex. PolIII' associates with the gamma complex (composed of gamma, delta, delta', psi and chi chains) and with the beta chain to form the complete DNA polymerase III complex.

It catalyses the reaction DNA(n) + a 2'-deoxyribonucleoside 5'-triphosphate = DNA(n+1) + diphosphate. In terms of biological role, DNA polymerase III is a complex, multichain enzyme responsible for most of the replicative synthesis in bacteria. This DNA polymerase also exhibits 3' to 5' exonuclease activity. The delta subunit seems to interact with the gamma subunit to transfer the beta subunit on the DNA. This is DNA polymerase III subunit delta (holA) from Buchnera aphidicola subsp. Acyrthosiphon pisum (strain APS) (Acyrthosiphon pisum symbiotic bacterium).